Here is an 82-residue protein sequence, read N- to C-terminus: Spore coat protein T (82 aa).

A propeptide spanning residues 1-19 (MDYPLNEQSFEQITPYDER) is cleaved from the precursor.

Its subcellular location is the spore coat. Functionally, inner spore coat protein which seems to play a role in germination. The protein is Spore coat protein T (cotT) of Bacillus subtilis (strain 168).